Reading from the N-terminus, the 226-residue chain is MSSRKRKATDTAGRHSRMDPNLSSDDSQNPGAVAAANREVLDAGREDIISSGTERQQARKEKQDLVQEFEEPRNKVLQENREKFSRIMTSSFSAMEVKIKDVLKTHCEERQKLCQDYSLQFTNLNRKLTSDAYKLKKHAETLSNMFMEQQKFIHESLTLQKNRMEEFKSLCEKYLEKLEVLRDSRGNSIAEELRRLIATLEIKLLMLHNQQKTAAPPQSLLDVLFS.

The disordered stretch occupies residues 1–66; it reads MSSRKRKATD…QARKEKQDLV (66 aa). Residues 8–18 are compositionally biased toward basic and acidic residues; sequence ATDTAGRHSRM. Polar residues predominate over residues 21-30; sequence NLSSDDSQNP. Composition is skewed to basic and acidic residues over residues 39 to 48 and 56 to 66; these read EVLDAGREDI and QQARKEKQDLV. The stretch at 155–210 forms a coiled coil; the sequence is ESLTLQKNRMEEFKSLCEKYLEKLEVLRDSRGNSIAEELRRLIATLEIKLLMLHNQ.

Belongs to the XLR/SYCP3 family. Expressed in lymphoid cells.

This Mus musculus (Mouse) protein is X-linked lymphocyte-regulated protein 3C (Xlr3c).